We begin with the raw amino-acid sequence, 311 residues long: Putative S-adenosyl-L-methionine-dependent methyltransferase MMAR_0358 (311 aa).

S-adenosyl-L-methionine is bound by residues aspartate 132 and 161–162 (DL).

Belongs to the UPF0677 family.

Functionally, exhibits S-adenosyl-L-methionine-dependent methyltransferase activity. The chain is Putative S-adenosyl-L-methionine-dependent methyltransferase MMAR_0358 from Mycobacterium marinum (strain ATCC BAA-535 / M).